We begin with the raw amino-acid sequence, 142 residues long: Large ribosomal subunit protein uL11 (142 aa).

Belongs to the universal ribosomal protein uL11 family. Part of the ribosomal stalk of the 50S ribosomal subunit. Interacts with L10 and the large rRNA to form the base of the stalk. L10 forms an elongated spine to which L12 dimers bind in a sequential fashion forming a multimeric L10(L12)X complex. In terms of processing, one or more lysine residues are methylated.

Its function is as follows. Forms part of the ribosomal stalk which helps the ribosome interact with GTP-bound translation factors. The polypeptide is Large ribosomal subunit protein uL11 (Rhodopseudomonas palustris (strain HaA2)).